The chain runs to 250 residues: MEKLEKLYEGKAKQLYATDDPEVLWVEYKNSATAGDGEKKEDFAGKGRLNNLITTLIFDLLKKRGIDSHLVARVGETSQLVKKVTMFPLEIVLRNTAAGHFCSRLGVEEGIELKEPVLEYFLKNDELHDPFVNDDDLVALDVCTREDLAEIAPLARRINEALIEIFAKIDVKLVDFKIEMGRTSDGTLLLADEITPDSCRLWDQRDHSGKVEHLDKDLFRRDLGDIIPAYEEIESRLAELAKSEGIEVAE.

Belongs to the SAICAR synthetase family.

It catalyses the reaction 5-amino-1-(5-phospho-D-ribosyl)imidazole-4-carboxylate + L-aspartate + ATP = (2S)-2-[5-amino-1-(5-phospho-beta-D-ribosyl)imidazole-4-carboxamido]succinate + ADP + phosphate + 2 H(+). The protein operates within purine metabolism; IMP biosynthesis via de novo pathway; 5-amino-1-(5-phospho-D-ribosyl)imidazole-4-carboxamide from 5-amino-1-(5-phospho-D-ribosyl)imidazole-4-carboxylate: step 1/2. The chain is Phosphoribosylaminoimidazole-succinocarboxamide synthase from Bifidobacterium adolescentis (strain ATCC 15703 / DSM 20083 / NCTC 11814 / E194a).